A 124-amino-acid chain; its full sequence is Small ribosomal subunit protein uS12 (124 aa).

The residue at position 89 (aspartate 89) is a 3-methylthioaspartic acid.

The protein belongs to the universal ribosomal protein uS12 family. In terms of assembly, part of the 30S ribosomal subunit. Contacts proteins S8 and S17. May interact with IF1 in the 30S initiation complex.

With S4 and S5 plays an important role in translational accuracy. Functionally, interacts with and stabilizes bases of the 16S rRNA that are involved in tRNA selection in the A site and with the mRNA backbone. Located at the interface of the 30S and 50S subunits, it traverses the body of the 30S subunit contacting proteins on the other side and probably holding the rRNA structure together. The combined cluster of proteins S8, S12 and S17 appears to hold together the shoulder and platform of the 30S subunit. The chain is Small ribosomal subunit protein uS12 from Buchnera aphidicola subsp. Acyrthosiphon pisum (strain 5A).